We begin with the raw amino-acid sequence, 77 residues long: Acyl carrier protein (77 aa).

The 76-residue stretch at 2-77 folds into the Carrier domain; it reads ADVMERVTKI…DVVDYINNNQ (76 aa). Ser37 carries the O-(pantetheine 4'-phosphoryl)serine modification.

This sequence belongs to the acyl carrier protein (ACP) family. In terms of processing, 4'-phosphopantetheine is transferred from CoA to a specific serine of apo-ACP by AcpS. This modification is essential for activity because fatty acids are bound in thioester linkage to the sulfhydryl of the prosthetic group.

It localises to the cytoplasm. It participates in lipid metabolism; fatty acid biosynthesis. Its function is as follows. Carrier of the growing fatty acid chain in fatty acid biosynthesis. This Shouchella clausii (strain KSM-K16) (Alkalihalobacillus clausii) protein is Acyl carrier protein.